A 169-amino-acid chain; its full sequence is UPF0316 protein Dde_2502 (169 aa).

The next 3 helical transmembrane spans lie at 1-21 (MITAASLLTALAVFIARLCDV), 38-58 (LAFSVAFFEAVIWVYAVSRVI), and 68-88 (LAFALGFASGTYAGITLEGVF).

This sequence belongs to the UPF0316 family.

Its subcellular location is the cell membrane. This Oleidesulfovibrio alaskensis (strain ATCC BAA-1058 / DSM 17464 / G20) (Desulfovibrio alaskensis) protein is UPF0316 protein Dde_2502.